The sequence spans 611 residues: Putative pentatricopeptide repeat-containing protein At1g56570 (611 aa).

PPR repeat units follow at residues H44 to R74, D75 to P109, N110 to G144, S145 to K176, N177 to V211, T212 to S246, N247 to T281, W282 to P311, N312 to K346, N347 to R377, N379 to P413, D414 to E444, and D450 to K480. The segment at T485–E561 is type E motif. The segment at N562 to R592 is type E(+) motif.

The protein belongs to the PPR family. PCMP-E subfamily.

The chain is Putative pentatricopeptide repeat-containing protein At1g56570 (PCMP-E64) from Arabidopsis thaliana (Mouse-ear cress).